Consider the following 406-residue polypeptide: MSVEQAPVQRADFDQVMVPNYSPAAFIPVRGEGSRVWDQSGRELIDFAGGIAVNALGHCHPALVKALTEQANTLWHVSNVFTNEPALRLAHKLVDATFADRAFFCNSGAESNEAAFKLARRVAHDRFGPQKHEIIATVNSFHGRTLFTVSVGGQPKYSDGFGPKITGISHVPYNDLEALKAQISDKTCAVVIEPIQGESGVVPADKAYLEGARKLCDEHNALLIFDEVQTGVGRTGSLYAYQHYGVIPDILTSAKSLGGGFPIGAMLTTTELAKHLAVGTHGTTYGGNPLGCAVACAVLDVVNTPETLAGIKAKHERFKTRLEQIGQQYNLFSQVRGVGLLLGCVLTEAWKGKAKDVLNAAEKEGVMVLQAGPDVVRFAPSLVVEDADIDEGLDRFERAVATLTKG.

Residues glycine 108–alanine 109 and phenylalanine 141 each bind pyridoxal 5'-phosphate. Arginine 144 is a N(2)-acetyl-L-ornithine binding site. Pyridoxal 5'-phosphate is bound at residue aspartate 226–glutamine 229. Residue lysine 255 is modified to N6-(pyridoxal phosphate)lysine. A N(2)-acetyl-L-ornithine-binding site is contributed by threonine 283. Residue threonine 284 participates in pyridoxal 5'-phosphate binding.

This sequence belongs to the class-III pyridoxal-phosphate-dependent aminotransferase family. ArgD subfamily. As to quaternary structure, homodimer. Pyridoxal 5'-phosphate serves as cofactor.

It localises to the cytoplasm. The enzyme catalyses N(2)-acetyl-L-ornithine + 2-oxoglutarate = N-acetyl-L-glutamate 5-semialdehyde + L-glutamate. It participates in amino-acid biosynthesis; L-arginine biosynthesis; N(2)-acetyl-L-ornithine from L-glutamate: step 4/4. This Pseudomonas putida (strain ATCC 47054 / DSM 6125 / CFBP 8728 / NCIMB 11950 / KT2440) protein is Acetylornithine aminotransferase.